A 38-amino-acid polypeptide reads, in one-letter code: Photosystem II reaction center protein L (38 aa).

A helical membrane pass occupies residues 17-37 (SLYWGLLLIFVLAILFSSYIF).

It belongs to the PsbL family. PSII is composed of 1 copy each of membrane proteins PsbA, PsbB, PsbC, PsbD, PsbE, PsbF, PsbH, PsbI, PsbJ, PsbK, PsbL, PsbM, PsbT, PsbX, PsbY, PsbZ, Psb30/Ycf12, at least 3 peripheral proteins of the oxygen-evolving complex and a large number of cofactors. It forms dimeric complexes.

It localises to the plastid. The protein localises to the chloroplast thylakoid membrane. One of the components of the core complex of photosystem II (PSII). PSII is a light-driven water:plastoquinone oxidoreductase that uses light energy to abstract electrons from H(2)O, generating O(2) and a proton gradient subsequently used for ATP formation. It consists of a core antenna complex that captures photons, and an electron transfer chain that converts photonic excitation into a charge separation. This subunit is found at the monomer-monomer interface and is required for correct PSII assembly and/or dimerization. In Mesostigma viride (Green alga), this protein is Photosystem II reaction center protein L.